The chain runs to 237 residues: Derlin-2 (237 aa).

At 1 to 20 (MNGVVAALEEMPPVTRFYTG) the chain is on the cytoplasmic side. A helical membrane pass occupies residues 21–41 (ACVLLTTAVHLEFVTPFHLYF). Residues 42 to 54 (NWELIIRKYQFWR) lie on the Lumenal side of the membrane. The chain crosses the membrane as a helical span at residues 55–75 (LITSFCFFGSFGFSFLFNMIF). Over 76 to 97 (TYRYCMMLEEGSFRGRRADFVY) the chain is Cytoplasmic. The helical transmembrane segment at 98–118 (MFLFGAVLMILSGIFVQILFL) threads the bilayer. At 119 to 166 (GQAFTIMLVYIWSRRNPMIQMNFFGVLTFTAPYLPWVLLLFSLLLGNN) the chain is on the lumenal side. A helical membrane pass occupies residues 167–187 (AVVDFMGIACGHIYFFLEDVF). Over 188 to 237 (PFQEHGKRFLKTPQWLVYLFDERRPEPLPEDERPGGFEWGDEQPEQEQHD) the chain is Cytoplasmic. The span at 212 to 222 (PEPLPEDERPG) shows a compositional bias: basic and acidic residues. The interval 212-237 (PEPLPEDERPGGFEWGDEQPEQEQHD) is disordered. The span at 226 to 237 (WGDEQPEQEQHD) shows a compositional bias: acidic residues.

This sequence belongs to the derlin family.

It is found in the endoplasmic reticulum membrane. Its function is as follows. May be required for the degradation process of some specific misfolded endoplasmic reticulum (ER) luminal proteins. Participates in the transfer of misfolded proteins from the ER to the cytosol, where they are destroyed by the proteasome in a ubiquitin-dependent manner. Its precise function remains unclear, but its ability to complement der1 mutations in C.cerevisiae, suggests a similar function in the degradation of ER misfolded proteins. The polypeptide is Derlin-2 (Caenorhabditis elegans).